The following is a 252-amino-acid chain: MALIEDALYKRIKNRVGRAIAEYGLIEDGDRIAVGVSGGKDSYTLLHMLDTLRRRAPVRYEVVAINIDSGYPGFRADIIEEHLHENGFTVHMEKTDHYGIIKEKRRLDSSYCSICARLKRGALYALAQQHNCNKLALGHHMDDFIETLLLNQFFVGALKAMAPGMLADNGLTTVIRPLVYVSEEDIIQFSRNNRFPVVCCCCPVCGSADQQRRRMKELLKELEKENPYIKKSLLRALANVQPRHLLDKRLKS.

The PP-loop motif motif lies at 37-42 (SGGKDS). [4Fe-4S] cluster contacts are provided by C112, C115, and C202.

It belongs to the TtcA family. Homodimer. The cofactor is Mg(2+). Requires [4Fe-4S] cluster as cofactor.

The protein resides in the cytoplasm. It carries out the reaction cytidine(32) in tRNA + S-sulfanyl-L-cysteinyl-[cysteine desulfurase] + AH2 + ATP = 2-thiocytidine(32) in tRNA + L-cysteinyl-[cysteine desulfurase] + A + AMP + diphosphate + H(+). Its pathway is tRNA modification. Functionally, catalyzes the ATP-dependent 2-thiolation of cytidine in position 32 of tRNA, to form 2-thiocytidine (s(2)C32). The sulfur atoms are provided by the cysteine/cysteine desulfurase (IscS) system. The protein is tRNA-cytidine(32) 2-sulfurtransferase of Geotalea daltonii (strain DSM 22248 / JCM 15807 / FRC-32) (Geobacter daltonii).